Consider the following 124-residue polypeptide: Small ribosomal subunit protein eS6 (124 aa).

The protein belongs to the eukaryotic ribosomal protein eS6 family.

This is Small ribosomal subunit protein eS6 from Methanococcus maripaludis (strain C7 / ATCC BAA-1331).